The primary structure comprises 476 residues: MAAAAAGGAPGPAPGPSRPAPAARNPPAVPRRRGDSRRRQAALFFLNNISLDGRPPSLGPGGEKPAPPPPPPTEAREAPAPPPAPPGGLPGLPARPAPQGLLSPTTAPAGLGLDGQRQRRRVTSQRCSLEFLEDTVGCASVQRTKHASGSPRHKGLKKTHFIKNMRQYDTKNSRIVLICAKRSLCAAFSVLPYGEGLRISDLRVDSQKQRHPSGGVSVSSEMVFELEGVELGADGKVVSYAKFLYPTNALVIHKNDSHGLLPQPRPSIPRAPPGSRHKPVPTKSTPAGTELGSDGGDAVEYNPNLLDDPQWPCGKHKRVLIFASYMTTVIEYVKPADLKKDMNETFREKFPHIKLTLSKIRSLKREMRNLSEECSLEPVTVSMAYVYFEKLVLQGKLNKQNRKLCAGACVLLAAKISSDLRKSEVKQLIDKLEERFRFNRKDLIGFEFTVLVALELALYLPENQVLPHYRRLTQQF.

The segment at 1–119 is disordered; sequence MAAAAAGGAP…GLGLDGQRQR (119 aa). The span at 30 to 40 shows a compositional bias: basic residues; it reads PRRRGDSRRRQ. Pro residues predominate over residues 65–96; sequence PAPPPPPPTEAREAPAPPPAPPGGLPGLPARP. Residues Ser128 and Ser206 each carry the phosphoserine modification. Residues 256 to 295 form a disordered region; that stretch reads DSHGLLPQPRPSIPRAPPGSRHKPVPTKSTPAGTELGSDG. Pro residues predominate over residues 263–272; it reads QPRPSIPRAP.

The protein belongs to the cyclin family. As to quaternary structure, binds to CDK3, CDK5 and ABL1. The C-terminal cyclin-box-like region binds to CDK5. As to expression, widely expressed.

Its function is as follows. Unknown. Probably involved in G1-S cell cycle transition. The sequence is that of CDK5 and ABL1 enzyme substrate 2 (Cables2) from Mus musculus (Mouse).